The primary structure comprises 414 residues: FAD-dependent monooxygenase adaC (414 aa).

FAD contacts are provided by Glu32, Ala43, Arg115, Asp325, and Gly338.

It belongs to the paxM FAD-dependent monooxygenase family. It depends on FAD as a cofactor.

It catalyses the reaction 3-(2,4-dioxopentyl)-3,6,8,9-tetrahydroxy-1-oxo-1,2,3,4-tetrahydroanthracene-2-carboxyl-[ACP] + NADPH + O2 + H(+) = 3-(2,4-dioxopentyl)-2,3,6,8,9-pentahydroxy-1-oxo-1,2,3,4-tetrahydroanthracene-2-carboxyl-[ACP] + NADP(+) + H2O. It functions in the pathway secondary metabolite biosynthesis. In terms of biological role, FAD-dependent monooxygenase; part of the gene cluster that mediates the biosynthesis of the linear tetracyclic TAN-1612 neuropeptide Y receptor antagonist. The decaketide backbone of TAN-1612 is synthesized by the non-reducing polyketide synthase adaA via condensation of one acetyl-CoA starter unit with 9 malonyl-CoA units. The FAD-dependent monooxygenase adaC then performs hydroxylation at C2 while the polaketide chain is still attached to the NRPKS adaA. The alpha-hydroxylation step at C2 appears to be crucial for the following C18-C1 Claisen cyclization and release of the C9-hydroxyl version of TAN-1612 from the NRPKS adaA, two steps performed by the lactamase-like protein adaB. Finally, the O-methyltransferase adaD performs the C9 O-methylation to complete the biosynthesis of TAN-1612. The chain is FAD-dependent monooxygenase adaC from Aspergillus niger.